A 544-amino-acid chain; its full sequence is MAKSIIFSEEARRALEHGMDILAEAVAVTLGPKGRNVVLEKKFGAPQIVNDGVTIAKEIELEDHIENTGVSLIRQAASKTNDTAGDGTTTATVLAHAMVKEGLKNVAAGANPIALKRGIDKAVKFLVDKIAEHARPVEDSKAIAQVAAISAGNDEEVGRMIAEAMDKVGREGVISLEEGKSMTTELEVTEGMRFDKGYISPYFVTDTERMEAVLENPYILITDKKITLVQDLVPVLEQVARAGRPLLIIAEDIEKEALATLVVNKLRGVLSVVAVKAPGFGDRRKAMLEDIAILTGGEVISEERGLKLENARLDSFGSARRVTVTKDHTTIVAEGNEAAVKARCEQIRRQIEETDSTYDKEKLQERLAKLSGGVAVIKVGAATETEMKDRKLRLEDAINATKAAVEEGIVPGGGTTLAHLMPAVTEWAQANLSGDELVGAMLVARALGAPLRRIAENAGQNGSIVLERVKEKPFTVGYDAQNDAYVDMFEAGIVDPAKVTRSALQNAASIASMVLTTEAIVVDKPEPKSNKPAGGGGGVDDYDY.

ATP is bound by residues 29 to 32, 86 to 90, Gly-413, and Asp-495; these read TLGP and DGTTT. Residues 525–544 form a disordered region; sequence PEPKSNKPAGGGGGVDDYDY. The segment covering 533 to 544 has biased composition (gly residues); sequence AGGGGGVDDYDY.

This sequence belongs to the chaperonin (HSP60) family. As to quaternary structure, forms a cylinder of 14 subunits composed of two heptameric rings stacked back-to-back. Interacts with the co-chaperonin GroES.

Its subcellular location is the cytoplasm. It carries out the reaction ATP + H2O + a folded polypeptide = ADP + phosphate + an unfolded polypeptide.. In terms of biological role, together with its co-chaperonin GroES, plays an essential role in assisting protein folding. The GroEL-GroES system forms a nano-cage that allows encapsulation of the non-native substrate proteins and provides a physical environment optimized to promote and accelerate protein folding. The polypeptide is Chaperonin GroEL 2 (Synechococcus sp. (strain JA-3-3Ab) (Cyanobacteria bacterium Yellowstone A-Prime)).